The primary structure comprises 426 residues: 3-phosphoshikimate 1-carboxyvinyltransferase (426 aa).

Residues lysine 22, serine 23, and arginine 27 each contribute to the 3-phosphoshikimate site. Lysine 22 is a binding site for phosphoenolpyruvate. Phosphoenolpyruvate is bound by residues glycine 96 and arginine 124. Positions 170, 171, 172, 198, 314, 337, and 341 each coordinate 3-phosphoshikimate. Glutamine 172 provides a ligand contact to phosphoenolpyruvate. The Proton acceptor role is filled by aspartate 314. Phosphoenolpyruvate contacts are provided by arginine 345, arginine 387, and lysine 412.

The protein belongs to the EPSP synthase family. As to quaternary structure, monomer.

The protein resides in the cytoplasm. It carries out the reaction 3-phosphoshikimate + phosphoenolpyruvate = 5-O-(1-carboxyvinyl)-3-phosphoshikimate + phosphate. The protein operates within metabolic intermediate biosynthesis; chorismate biosynthesis; chorismate from D-erythrose 4-phosphate and phosphoenolpyruvate: step 6/7. Its function is as follows. Catalyzes the transfer of the enolpyruvyl moiety of phosphoenolpyruvate (PEP) to the 5-hydroxyl of shikimate-3-phosphate (S3P) to produce enolpyruvyl shikimate-3-phosphate and inorganic phosphate. The protein is 3-phosphoshikimate 1-carboxyvinyltransferase of Shewanella woodyi (strain ATCC 51908 / MS32).